The sequence spans 198 residues: RxLR effector protein Htp1 (198 aa).

An N-terminal signal peptide occupies residues 1–23 (MRIHHPLTLAALCVVLHESLGAA). Residues 46–49 (RHLR) carry the RxLR motif. Disordered stretches follow at residues 48-101 (LRSD…TPMK) and 115-198 (TKNA…PTFD). N70 carries an N-linked (GlcNAc...) asparagine glycan. Over residues 70–91 (NNSQEQATTGNSVETNQVPSTE) the composition is skewed to polar residues. A compositionally biased stretch (acidic residues) spans 126 to 137 (DDDDSDFSDDDV). The span at 173–191 (APTNAPTGTDAPTDAPTDA) shows a compositional bias: low complexity.

This sequence belongs to the RxLR effector family. As to quaternary structure, interacts with the effector Htp3 within the host cells.

The protein resides in the secreted. Its subcellular location is the host cell. Effector involved in the disease saprolegniosis in salmonids and other freshwater fish, resulting in considerable economic losses in aquaculture. Within the host fish cells, Htp1 is involved in the uptake of the S.parasitica effector Htp3 at a neutral pH (pH 7.5) and its release from vesicles into host cytosol where it degrades nucleic acids. This chain is RxLR effector protein Htp1, found in Saprolegnia parasitica (strain CBS 223.65).